A 409-amino-acid polypeptide reads, in one-letter code: Magnesium-protoporphyrin IX monomethyl ester [oxidative] cyclase, chloroplastic (409 aa).

2 disordered regions span residues 1–23 (MAAE…SNPS) and 36–60 (RMSA…TKKE). Residues 1–36 (MAAEMALVKPISKFSSPKLSNPSKFLSGRRFSTVIR) constitute a chloroplast transit peptide. Polar residues predominate over residues 13–23 (KFSSPKLSNPS).

It belongs to the AcsF family. As to quaternary structure, part of the FLU-containing chloroplast membrane complex composed of FLU, CRD1, PORB, PORC, CHLP and HEMA1. Interacts with YCF54 in chloroplasts. The cofactor is Fe cation.

It localises to the plastid. The protein resides in the chloroplast inner membrane. The protein localises to the chloroplast thylakoid membrane. It carries out the reaction Mg-protoporphyrin IX 13-monomethyl ester + 3 NADPH + 3 O2 + 2 H(+) = 3,8-divinyl protochlorophyllide a + 3 NADP(+) + 5 H2O. It participates in porphyrin-containing compound metabolism; chlorophyll biosynthesis. In terms of biological role, catalytic component of the MgProto monomethylester (MgProtoME) cyclase complex that catalyzes the formation of the isocyclic ring in chlorophyll biosynthesis. Mediates the cyclase reaction, which results in the formation of divinylprotochlorophyllide (Pchlide) characteristic of all chlorophylls from magnesium-protoporphyrin IX 13-monomethyl ester (MgPMME). The protein is Magnesium-protoporphyrin IX monomethyl ester [oxidative] cyclase, chloroplastic of Arabidopsis thaliana (Mouse-ear cress).